A 269-amino-acid chain; its full sequence is MIRKPAVAGYFYPSNRNELLSLISSFHVQQSEVSCQPIGVVVPHAGIVYSGRTAMYSYNALRNSSIRDFIIIGPNHRPMTPYASIFPSGSWETPLGNAIINEELASELYKNSQYIVKDEESHSVEHSIEVQIPFLQYMFGNSFTFVPVILGDQEKVVANDIASALMRLSKPYILIASSDFTHYERSDIVERKDMDLISRIVDLDIDGFYDTIERENVTACGYGAIAILMIIAKKIGAKISLLNHSNSGDVTNDYDEVVGYSSIVACRQI.

It belongs to the MEMO1 family.

This chain is MEMO1 family protein TV1383, found in Thermoplasma volcanium (strain ATCC 51530 / DSM 4299 / JCM 9571 / NBRC 15438 / GSS1).